Here is a 600-residue protein sequence, read N- to C-terminus: Elongation factor 4 (600 aa).

The tr-type G domain occupies 5 to 187 (KYIRNFSIIA…AIINKLPAPK (183 aa)). GTP-binding positions include 17 to 22 (DHGKST) and 134 to 137 (NKID).

It belongs to the TRAFAC class translation factor GTPase superfamily. Classic translation factor GTPase family. LepA subfamily.

The protein localises to the cell inner membrane. It catalyses the reaction GTP + H2O = GDP + phosphate + H(+). Functionally, required for accurate and efficient protein synthesis under certain stress conditions. May act as a fidelity factor of the translation reaction, by catalyzing a one-codon backward translocation of tRNAs on improperly translocated ribosomes. Back-translocation proceeds from a post-translocation (POST) complex to a pre-translocation (PRE) complex, thus giving elongation factor G a second chance to translocate the tRNAs correctly. Binds to ribosomes in a GTP-dependent manner. In Rickettsia prowazekii (strain Madrid E), this protein is Elongation factor 4.